Here is a 501-residue protein sequence, read N- to C-terminus: Glycine betaine/proline/ectoine/pipecolic acid transporter OusA (501 aa).

Residues 1–38 lie on the Cytoplasmic side of the membrane; it reads MKLKRKRVKPIALDDVTIIDDGRLRKAITAAALGNAME. A helical membrane pass occupies residues 39-59; that stretch reads WFDFGVYGFVAYALGQVFFPG. Topologically, residues 60-66 are periplasmic; that stretch reads ADPGVQM. A helical transmembrane segment spans residues 67–87; sequence IAALATFSVPFLIRPLGGVFF. Topologically, residues 88 to 98 are cytoplasmic; the sequence is GALGDKYGRQK. A helical transmembrane segment spans residues 99–119; sequence ILAITIIIMSISTFCIGLIPS. Over 120–122 the chain is Periplasmic; sequence YER. The chain crosses the membrane as a helical span at residues 123 to 143; sequence IGIWAPILLLLAKMAQGFSVG. The Cytoplasmic portion of the chain corresponds to 144–170; the sequence is GEYTGASIFVAEYSPDRKRGFMGSWLD. A helical membrane pass occupies residues 171-191; it reads FGSIAGFVLGAGVVVLISTLI. At 192 to 195 the chain is on the periplasmic side; sequence GEQA. Residues 196–216 form a helical membrane-spanning segment; sequence FLAWGWRLPFFLALPLGLIGL. The Cytoplasmic portion of the chain corresponds to 217-261; it reads YLRHALEETPAFRQHVEKLEQNDRDGLKAGPGVSFREIATHHWKS. A helical transmembrane segment spans residues 262 to 282; that stretch reads LLVCIGLVIATNVTYYMLLTY. Topologically, residues 283 to 298 are periplasmic; that stretch reads MPSYLSHSLHYSENHG. The chain crosses the membrane as a helical span at residues 299 to 319; that stretch reads VLIIIAIMIGMLFVQPVMGLL. Topologically, residues 320–326 are cytoplasmic; that stretch reads SDRFGRK. A helical transmembrane segment spans residues 327–347; that stretch reads PFVVIGSVAMFFLAVPSFMLI. Residues 348 to 350 lie on the Periplasmic side of the membrane; that stretch reads NSD. A helical membrane pass occupies residues 351-371; the sequence is IIGLIFLGLLMLAVILNAFTG. Topologically, residues 372-391 are cytoplasmic; it reads VMASTLPALFPTHIRYSALA. A helical transmembrane segment spans residues 392–412; the sequence is SAFNISVLIAGLTPTVAAWLV. Residues 413–417 lie on the Periplasmic side of the membrane; that stretch reads ESSQN. A helical transmembrane segment spans residues 418-438; sequence LYMPAYYLMVIAVIGLLTGLF. Residues 439 to 501 lie on the Cytoplasmic side of the membrane; the sequence is MKETANKPLK…LVAQHPRIND (63 aa). The stretch at 461 to 495 forms a coiled coil; that stretch reads KEILQEHHDNIEHKIEDITQQIAELEAKRQLLVAQ.

It belongs to the major facilitator superfamily. Sugar transporter (TC 2.A.1.1) family.

It localises to the cell inner membrane. In terms of biological role, involved in uptake and accumulation of various osmoprotectants. Allows the uptake of glycine betaine, proline, ectoine, and pipecolic acid. May be a contributory factor in the infection progression within the host. This Dickeya dadantii (strain 3937) (Erwinia chrysanthemi (strain 3937)) protein is Glycine betaine/proline/ectoine/pipecolic acid transporter OusA.